The primary structure comprises 747 residues: Potassium transporter 20 (747 aa).

Over 1–47 the chain is Cytoplasmic; the sequence is MSVQEDDDAAGPEVDRLRRHDSFYGDAEKVSNDKSHGTGENWARTLQ. The chain crosses the membrane as a helical span at residues 48–68; it reads LAFQSIGVVYGDVGTSPLYVY. The Extracellular segment spans residues 69–84; the sequence is SSTFPDGVKHPDDLVG. Residues 85–105 traverse the membrane as a helical segment; that stretch reads VLSLMLYTLILIPMVKYVFIV. Topologically, residues 106-171 are cytoplasmic; the sequence is LYANDNGDGG…QKLESSNAAK (66 aa). A helical membrane pass occupies residues 172–192; it reads IALFTITILGTSMVMGDGTLT. Residues 193–209 are Extracellular-facing; the sequence is PAISVLSAVSGIREKAP. The helical transmembrane segment at 210–230 threads the bilayer; that stretch reads SLTQLQVVWISVPILIVLFSV. Residues 231–237 lie on the Cytoplasmic side of the membrane; the sequence is QRFGTDK. A helical transmembrane segment spans residues 238–258; that stretch reads VGYSFAPVISVWFVLIAGIGA. Topologically, residues 259-288 are extracellular; it reads YNLAVHEITILRAFNPMYIIDYFRRNGKEA. The chain crosses the membrane as a helical span at residues 289–309; it reads WVSLGGAVLCITGTEAMFADL. The Cytoplasmic portion of the chain corresponds to 310 to 318; it reads GHFNIRAIQ. The chain crosses the membrane as a helical span at residues 319–339; it reads LSFTCVLFPSVALCYMGQAAY. The Extracellular segment spans residues 340 to 353; that stretch reads LRKFPEDVGDTFYK. A helical transmembrane segment spans residues 354–374; that stretch reads SLPAPLFWPVFVVAIMAAIIA. Topologically, residues 375–410 are cytoplasmic; sequence SQAMLSGAFAILSKALPLGCFPRVEVVHTSNKYEGQ. The helical transmembrane segment at 411 to 431 threads the bilayer; sequence VYIPEVNFLIGVASVAITVAF. At 432 to 442 the chain is on the extracellular side; it reads QTTANIGNAYG. Residues 443–463 form a helical membrane-spanning segment; sequence ICVVMVFSITTHLMTVVMLLI. At 464–469 the chain is on the cytoplasmic side; the sequence is WKVRLP. The chain crosses the membrane as a helical span at residues 470–490; the sequence is FIAAFYVVFTFTEFLYLSSIL. Residues 491–496 lie on the Extracellular side of the membrane; that stretch reads SKFAEG. Residues 497–517 traverse the membrane as a helical segment; that stretch reads GYLPFCFSLVLMALMATWHYV. The Cytoplasmic segment spans residues 518–747; that stretch reads HVKRYWYELD…LLKVGITYEI (230 aa).

This sequence belongs to the HAK/KUP transporter (TC 2.A.72.3) family.

Its subcellular location is the membrane. High-affinity potassium transporter. This Oryza sativa subsp. japonica (Rice) protein is Potassium transporter 20 (HAK20).